Reading from the N-terminus, the 147-residue chain is Small ribosomal subunit protein eS19 (147 aa).

Belongs to the eukaryotic ribosomal protein eS19 family. Part of the 30S ribosomal subunit.

Functionally, may be involved in maturation of the 30S ribosomal subunit. This is Small ribosomal subunit protein eS19 from Archaeoglobus fulgidus (strain ATCC 49558 / DSM 4304 / JCM 9628 / NBRC 100126 / VC-16).